The primary structure comprises 110 residues: Large ribosomal subunit protein uL22 (110 aa).

The protein belongs to the universal ribosomal protein uL22 family. Part of the 50S ribosomal subunit.

Its function is as follows. This protein binds specifically to 23S rRNA; its binding is stimulated by other ribosomal proteins, e.g. L4, L17, and L20. It is important during the early stages of 50S assembly. It makes multiple contacts with different domains of the 23S rRNA in the assembled 50S subunit and ribosome. In terms of biological role, the globular domain of the protein is located near the polypeptide exit tunnel on the outside of the subunit, while an extended beta-hairpin is found that lines the wall of the exit tunnel in the center of the 70S ribosome. The protein is Large ribosomal subunit protein uL22 of Pasteurella multocida (strain Pm70).